Reading from the N-terminus, the 364-residue chain is Histidinol-phosphate aminotransferase BQ2027_MB2256C (364 aa).

An N6-(pyridoxal phosphate)lysine modification is found at Lys220.

Belongs to the class-I pyridoxal-phosphate-dependent aminotransferase family. In terms of assembly, monomer. It depends on pyridoxal 5'-phosphate as a cofactor.

The protein resides in the secreted. It is found in the cell wall. The enzyme catalyses L-histidinol phosphate + 2-oxoglutarate = 3-(imidazol-4-yl)-2-oxopropyl phosphate + L-glutamate. Aminotransferase that catalyzes the conversion of histidinol phosphate and 2-oxoglutarate into L-glutamate and imidazole acetol phosphate. Might play a significant role in mediating histidine biosynthesis during infection. Facilitates mycobacterial survival and virulence in macrophages. The protein is Histidinol-phosphate aminotransferase BQ2027_MB2256C of Mycobacterium bovis (strain ATCC BAA-935 / AF2122/97).